A 103-amino-acid chain; its full sequence is Small ribosomal subunit protein uS10 (103 aa).

The protein belongs to the universal ribosomal protein uS10 family. As to quaternary structure, part of the 30S ribosomal subunit.

In terms of biological role, involved in the binding of tRNA to the ribosomes. The sequence is that of Small ribosomal subunit protein uS10 from Colwellia psychrerythraea (strain 34H / ATCC BAA-681) (Vibrio psychroerythus).